The sequence spans 192 residues: Cytochrome b-245 light chain (192 aa).

Over 2–7 (GQIEWA) the chain is Cytoplasmic. Residues 8-30 (MWANEQALASGLILITGGIVATA) traverse the membrane as a helical segment. At 31–35 (GQFAQ) the chain is on the extracellular side. The helical transmembrane segment at 36–53 (WYLGAYSIAAGVLICLLE) threads the bilayer. The Cytoplasmic segment spans residues 54–69 (YPRGKRSKGSTMERCG). An intramembrane segment occupies 70 to 80 (QKYLTRAVKVF). At 81–86 (GPLTSN) the chain is on the cytoplasmic side. A helical transmembrane segment spans residues 87-104 (YYIRAFLHLGLSVPAGFL). A topological domain (extracellular) is located at residue L105. Residues 106-126 (ATILGTACLAIASSIYLLAAI) form a helical membrane-spanning segment. Residues 127–192 (HGEHWTPIET…NPMPVTDEVV (66 aa)) lie on the Cytoplasmic side of the membrane. Residues 134–192 (IETKPKERPQVGGTIKQPPSNPPPRPPAEARKKPSEEEVAGVPGGGPQENPMPVTDEVV) form a disordered region. T147 carries the post-translational modification Phosphothreonine. K149 is covalently cross-linked (Glycyl lysine isopeptide (Lys-Gly) (interchain with G-Cter in ubiquitin)). The residue at position 168 (S168) is a Phosphoserine.

It belongs to the p22phox family. As to quaternary structure, component of the phagocyte NADPH oxidase core complex/cytochrome b558 complex, composed of CYBB (heavy chain (beta)) and CYBA (light chain (alpha)). Component of the phagocyte NADPH oxidase complex composed of an obligatory core heterodimer formed by the membrane proteins CYBA and CYBB and the cytosolic regulatory subunits NCF1/p47-phox, NCF2/p67-phox, NCF4/p40-phox and the small GTPase RAC1 or RAC2. Interacts with NCF1 (via SH3 domain). Interacts with SH3PXD2A. Interacts with DUOX1, DUOX2 and TPO. Interacts with NOX4; this interaction mediates superoxide generation. Interacts with calprotectin (S100A8/9). Interacts with GBP7. Interacts with NOXO1. Forms a heterodimer with NOX3 and is essential for activity and cell membrane localization of NOX3. Interacts with NOX1. Phosphorylation at Thr-147 enhances NADPH oxidase activity by promoting NCF1/p47-phox binding. Post-translationally, ubiquitinated at Lys-149 likely by RNF145.

It is found in the cell membrane. In terms of biological role, subunit of NADPH oxidase complexes that is required for the NADPH oxidase activity that generates, in various cell types, superoxide from molecular oxygen utilizing NADPH as an electron donor. Subunit of the phagocyte NADPH oxidase complex that mediates the transfer of electrons from cytosolic NADPH to O2 to produce the superoxide anion (O2(-)). In the activated complex, electrons are first transferred from NADPH to flavin adenine dinucleotide (FAD) and subsequently transferred via two heme molecules to molecular oxygen, producing superoxide through an outer-sphere reaction. Activation of the NADPH oxidase complex is initiated by the assembly of cytosolic subunits of the NADPH oxidase complex with the core NADPH oxidase complex to form a complex at the plasma membrane or phagosomal membrane. This activation process is initiated by phosphorylation dependent binding of the cytosolic NCF1/p47-phox subunit to the C-terminus of CYBA/p22-phox. Aassociates with NOX3 to form a functional NADPH oxidase constitutively generating superoxide. The chain is Cytochrome b-245 light chain from Tursiops truncatus (Atlantic bottle-nosed dolphin).